The primary structure comprises 137 residues: Small ribosomal subunit protein uS19 (137 aa).

The protein belongs to the universal ribosomal protein uS19 family.

Protein S19 forms a complex with S13 that binds strongly to the 16S ribosomal RNA. The protein is Small ribosomal subunit protein uS19 of Methanoculleus marisnigri (strain ATCC 35101 / DSM 1498 / JR1).